The following is a 509-amino-acid chain: uncharacterized protein (509 aa).

13 helical membrane-spanning segments follow: residues 14 to 34, 117 to 137, 158 to 178, 188 to 208, 209 to 229, 240 to 260, 303 to 323, 324 to 344, 359 to 379, 399 to 419, 423 to 443, 458 to 478, and 484 to 504; these read SAFTILFAILILAVGLTWVIP, TIEAVDVMVFIFVLGGMIGVI, EFFIVFCVSVLMVLGGTTCGI, ILVPVFLALGYDAIVCVGAIF, LAASMGTAFSTINPFSVVIAS, IGFRALGLVLGATCVIAYLYW, LILTLFCISFPIMIWGVMVGG, WWFPQMAASFLAITIIIMFIS, ASELVGVSLIIGLARGVNLVL, MPGSVFILGQLVVFIFLGLIV, SGLAVLSMPIMAPLADSVGIP, MLFLAPTGLVLVTLQMLQIPF, and FVMPMIGCLLLIGSILLVVQV.

This sequence to E.coli YfcC. It to B.subtilis YcgA.

Its subcellular location is the cell membrane. This is an uncharacterized protein from Haemophilus influenzae (strain ATCC 51907 / DSM 11121 / KW20 / Rd).